A 383-amino-acid polypeptide reads, in one-letter code: Probable 2-succinylbenzoate--CoA ligase (383 aa).

It belongs to the ATP-dependent AMP-binding enzyme family. MenE subfamily.

The enzyme catalyses 2-succinylbenzoate + ATP + CoA = 2-succinylbenzoyl-CoA + AMP + diphosphate. Its pathway is quinol/quinone metabolism; 1,4-dihydroxy-2-naphthoate biosynthesis; 1,4-dihydroxy-2-naphthoate from chorismate: step 5/7. The protein operates within quinol/quinone metabolism; menaquinone biosynthesis. Converts 2-succinylbenzoate (OSB) to 2-succinylbenzoyl-CoA (OSB-CoA). May be involved in the biosynthesis of menaquinone. This chain is Probable 2-succinylbenzoate--CoA ligase (menE), found in Mycobacterium tuberculosis (strain CDC 1551 / Oshkosh).